We begin with the raw amino-acid sequence, 223 residues long: Deoxyribose-phosphate aldolase 1 (223 aa).

Residue Asp91 is the Proton donor/acceptor of the active site. Catalysis depends on Lys154, which acts as the Schiff-base intermediate with acetaldehyde. Lys183 functions as the Proton donor/acceptor in the catalytic mechanism.

The protein belongs to the DeoC/FbaB aldolase family. DeoC type 1 subfamily.

The protein localises to the cytoplasm. It carries out the reaction 2-deoxy-D-ribose 5-phosphate = D-glyceraldehyde 3-phosphate + acetaldehyde. Its pathway is carbohydrate degradation; 2-deoxy-D-ribose 1-phosphate degradation; D-glyceraldehyde 3-phosphate and acetaldehyde from 2-deoxy-alpha-D-ribose 1-phosphate: step 2/2. Its function is as follows. Catalyzes a reversible aldol reaction between acetaldehyde and D-glyceraldehyde 3-phosphate to generate 2-deoxy-D-ribose 5-phosphate. This is Deoxyribose-phosphate aldolase 1 from Bacillus licheniformis (strain ATCC 14580 / DSM 13 / JCM 2505 / CCUG 7422 / NBRC 12200 / NCIMB 9375 / NCTC 10341 / NRRL NRS-1264 / Gibson 46).